The primary structure comprises 216 residues: Probable GTP-binding protein EngB (216 aa).

An EngB-type G domain is found at 37-214; that stretch reads GSVEIAFAGR…RAAMIRLLDE (178 aa). GTP contacts are provided by residues 45 to 52, 72 to 76, 92 to 95, 159 to 162, and 193 to 195; these read GRSNVGKS, GRTQE, DMPG, TKAD, and TSS. Positions 52 and 74 each coordinate Mg(2+).

The protein belongs to the TRAFAC class TrmE-Era-EngA-EngB-Septin-like GTPase superfamily. EngB GTPase family. The cofactor is Mg(2+).

Functionally, necessary for normal cell division and for the maintenance of normal septation. This Rhodopseudomonas palustris (strain ATCC BAA-98 / CGA009) protein is Probable GTP-binding protein EngB.